Reading from the N-terminus, the 100-residue chain is Small ribosomal subunit protein uS14 (100 aa).

It belongs to the universal ribosomal protein uS14 family. In terms of assembly, part of the 30S ribosomal subunit. Contacts proteins S3 and S10.

Its function is as follows. Binds 16S rRNA, required for the assembly of 30S particles and may also be responsible for determining the conformation of the 16S rRNA at the A site. In Prochlorococcus marinus (strain MIT 9211), this protein is Small ribosomal subunit protein uS14.